The primary structure comprises 213 residues: Glycerol-3-phosphate acyltransferase (213 aa).

6 consecutive transmembrane segments (helical) span residues 3–23 (ILLLILIAYLLGSIQTGLWIG), 54–76 (TITFLVDMLKGTLAVLLPIWLGI), 83–100 (IIGFFAIIGHVFPFFTGF), 110–130 (AGVLLGFVPLYFVFLLLVFAL), 142–162 (SITAAVVGLITLATFPAIHFL), and 163–183 (LDGYDPIFSAVLIIIVLVIIF).

Belongs to the PlsY family. Probably interacts with PlsX.

The protein localises to the cell membrane. It catalyses the reaction an acyl phosphate + sn-glycerol 3-phosphate = a 1-acyl-sn-glycero-3-phosphate + phosphate. Its pathway is lipid metabolism; phospholipid metabolism. Catalyzes the transfer of an acyl group from acyl-phosphate (acyl-PO(4)) to glycerol-3-phosphate (G3P) to form lysophosphatidic acid (LPA). This enzyme utilizes acyl-phosphate as fatty acyl donor, but not acyl-CoA or acyl-ACP. In Streptococcus thermophilus (strain ATCC BAA-491 / LMD-9), this protein is Glycerol-3-phosphate acyltransferase.